The chain runs to 984 residues: Mineralocorticoid receptor (984 aa).

Positions 1–602 (METKGYHSLP…STGSSRPSKI (602 aa)) are modulating. Residues 231 to 243 (QGTPLTCSPNVEN) show a composition bias toward polar residues. Disordered regions lie at residues 231-329 (QGTP…AAST) and 347-373 (GTSA…QEVP). Residues Ser250, Ser259, Ser283, Ser287, and Ser299 each carry the phosphoserine modification. Low complexity predominate over residues 259–291 (SPLSSPLSSMKSSISSPPSHCSVKSPVSSPNNV). Residues 292–329 (TLRSSVSSPANINNSRCSVSSPSNTNNRSTLSSPAAST) are compositionally biased toward polar residues. Zn(2+)-binding residues include Cys603, Cys606, Cys620, Cys623, Cys639, Cys645, Cys655, and Cys658. NR C4-type zinc fingers lie at residues 603 to 623 (CLVC…CGSC) and 639 to 663 (CAGR…LQKC). Residues 603 to 668 (CLVCGDEASG…RLQKCLQAGM (66 aa)) constitute a DNA-binding region (nuclear receptor). The hinge stretch occupies residues 669-725 (NLGARKSKKLGKLKGIHEEQPQQQQPPPPPPPPQSPEEGTTYIAPAKEPSVNTALVP). The disordered stretch occupies residues 684–710 (IHEEQPQQQQPPPPPPPPQSPEEGTTY). Residues 692-703 (QQPPPPPPPPQS) show a composition bias toward pro residues. The region spanning 726 to 964 (QLSTISRALT…EFPAMLVEII (239 aa)) is the NR LBD domain. Residues Asn770 and Gln776 each contribute to the 21-hydroxyprogesterone site. 2 residues coordinate aldosterone: Asn770 and Gln776. Progesterone is bound by residues Asn770 and Gln776. Positions 782–785 (KWAK) are important for coactivator binding. Residues Arg817 and Thr945 each coordinate 21-hydroxyprogesterone. Aldosterone is bound by residues Arg817 and Thr945. Progesterone contacts are provided by Arg817 and Thr945.

The protein belongs to the nuclear hormone receptor family. NR3 subfamily. As to quaternary structure, heteromultimeric cytoplasmic complex with HSP90, HSP70, and FKBP4, in the absence of ligand. After ligand binding, it translocates to the nucleus and binds to DNA as a homodimer and as a heterodimer with NR3C1. May interact with HSD11B2 in the absence of ligand. Binds the coactivators NCOA1, NCOA2, TIF1 and NRIP1. In terms of processing, phosphorylated. As to expression, ubiquitous. Highly expressed in distal tubules, convoluted tubules and cortical collecting duct in kidney, and in sweat glands. Detected at lower levels in cardiomyocytes, in epidermis and in colon enterocytes.

It is found in the cytoplasm. The protein resides in the nucleus. It localises to the endoplasmic reticulum membrane. Its function is as follows. Receptor for both mineralocorticoids (MC) such as aldosterone and glucocorticoids (GC) such as corticosterone or cortisol. Binds to mineralocorticoid response elements (MRE) and transactivates target genes. The effect of MC is to increase ion and water transport and thus raise extracellular fluid volume and blood pressure and lower potassium levels. The polypeptide is Mineralocorticoid receptor (NR3C2) (Homo sapiens (Human)).